We begin with the raw amino-acid sequence, 1592 residues long: Serine/threonine-protein kinase mrck-1 (1592 aa).

Positions 1–954 (MAEPPPDDSA…IFSPVSISAM (954 aa)) are involved in homo-dimerization. Residues 83–351 (FEVLKVIGKG…LSDFQLHPFF (269 aa)) form the Protein kinase domain. ATP-binding positions include 89–97 (IGKGAFGEV) and lysine 112. The active-site Proton acceptor is the aspartate 207. The AGC-kinase C-terminal domain maps to 352–426 (EGIDWNTIRD…THGSLLSDAR (75 aa)). Phosphoserine is present on serine 415. Tyrosine 416 carries the phosphotyrosine modification. 2 coiled-coil regions span residues 444–782 (ELME…KNNS) and 811–871 (LDLQ…IENS). The span at 782-796 (SPLTTSNYIQNTPSG) shows a compositional bias: polar residues. The tract at residues 782–801 (SPLTTSNYIQNTPSGWGSRR) is disordered. The segment at 955 to 1534 (ERGHNFERMK…FRTIGKDDRS (580 aa)) is involved in binding to membranes, with a preference for di-phosphorylated phosphoinositides (PIPs). A Phorbol-ester/DAG-type zinc finger spans residues 957 to 1007 (GHNFERMKIKTPTKCGHCTSILIGLDRQGLFCQSCQYACHVSCAERVSQSC). The Zn(2+) site is built by histidine 958, cysteine 971, cysteine 974, cysteine 988, cysteine 991, histidine 996, cysteine 999, and cysteine 1007. One can recognise a PH domain in the interval 1026 to 1154 (GTAYEGLVKT…WVVALSELKT (129 aa)). The CNH domain maps to 1181–1479 (IRVAQCCAII…KPLSGDGILS (299 aa)). The CRIB domain maps to 1544-1557 (ISTPSDFMHIVHMG). Residues 1544–1557 (ISTPSDFMHIVHMG) are involved in interaction with cdc-42 (GTP-bound). Deletion prevents rescue of a null mutant; furthermore deleted form of mrck-1 is no longer recruited to the cell cortex and instead appears to be completely cytoplasmic.

The protein belongs to the protein kinase superfamily. AGC Ser/Thr protein kinase family. DMPK subfamily. In terms of assembly, homodimer, via N-terminal domains. Interacts (via the CRIB domain) with cdc-42 (GTP-bound), but with a lower affinity for cdc-42 bound to GDP; the interaction is direct and may play a role in the recruitment of mrck-1 to the apical membrane. Requires Mg(2+) as cofactor. Expressed in embryonic and L4 larval seam cells and in embryonic dorsal and ventral epidermal cells. Also expressed in the pharynx throughout development and in sublateral nerve cords in the L4 larva.

It localises to the cytoplasm. The protein resides in the cell cortex. The catalysed reaction is L-seryl-[protein] + ATP = O-phospho-L-seryl-[protein] + ADP + H(+). It catalyses the reaction L-threonyl-[protein] + ATP = O-phospho-L-threonyl-[protein] + ADP + H(+). Serine/threonine-protein kinase. Involved in regulating endoderm precursor cell movements during early gastrulation; activates apical myosin and thereby increases actomyosin contractility and tension in the apical cell cortex, probably as a result of recruitment of mrck-1 to the cortex by a combination of interaction with active cdc-42 and membrane binding. May phosphorylate and inactivate the phosphatase mel-11, and thereby contribute to the regulation of myosin II contractility during embryonic elongation. Involved in controlling canal length and Golgi/ER integrity during excretory canal elongation. The protein is Serine/threonine-protein kinase mrck-1 of Caenorhabditis elegans.